Consider the following 210-residue polypeptide: Putative tyrosine-protein phosphatase OCA1 (210 aa).

One can recognise a Tyrosine-protein phosphatase domain in the interval 44–204 (NFCPVERYLY…EIDREKAPNW (161 aa)). The active-site Phosphocysteine intermediate is Cys140.

Belongs to the protein-tyrosine phosphatase family.

The protein resides in the cytoplasm. It catalyses the reaction O-phospho-L-tyrosyl-[protein] + H2O = L-tyrosyl-[protein] + phosphate. In terms of biological role, putative tyrosine-protein phosphatase required for protection against superoxide stress. This Kluyveromyces lactis (strain ATCC 8585 / CBS 2359 / DSM 70799 / NBRC 1267 / NRRL Y-1140 / WM37) (Yeast) protein is Putative tyrosine-protein phosphatase OCA1 (OCA1).